Consider the following 341-residue polypeptide: Cytoplasmic tRNA 2-thiolation protein 1 (341 aa).

It belongs to the TtcA family. CTU1/NCS6/ATPBD3 subfamily.

It is found in the cytoplasm. The protein operates within tRNA modification; 5-methoxycarbonylmethyl-2-thiouridine-tRNA biosynthesis. Functionally, plays a central role in 2-thiolation of mcm(5)S(2)U at tRNA wobble positions of tRNA(Lys), tRNA(Glu) and tRNA(Gln). Directly binds tRNAs and probably acts by catalyzing adenylation of tRNAs, an intermediate required for 2-thiolation. It is unclear whether it acts as a sulfurtransferase that transfers sulfur from thiocarboxylated URM1 onto the uridine of tRNAs at wobble position. This chain is Cytoplasmic tRNA 2-thiolation protein 1, found in Aedes aegypti (Yellowfever mosquito).